We begin with the raw amino-acid sequence, 22 residues long: Brevinin-1OKd (22 aa).

Lysine amide is present on lysine 22.

In terms of tissue distribution, expressed by the skin glands.

Its subcellular location is the secreted. Antimicrobial peptide. This is Brevinin-1OKd from Nidirana okinavana (Kampira Falls frog).